The following is a 153-amino-acid chain: Endoribonuclease YbeY (153 aa).

Zn(2+)-binding residues include His114, His118, and His124.

Belongs to the endoribonuclease YbeY family. Zn(2+) serves as cofactor.

It localises to the cytoplasm. In terms of biological role, single strand-specific metallo-endoribonuclease involved in late-stage 70S ribosome quality control and in maturation of the 3' terminus of the 16S rRNA. The protein is Endoribonuclease YbeY of Shewanella putrefaciens (strain CN-32 / ATCC BAA-453).